A 341-amino-acid chain; its full sequence is Major capsid protein (341 aa).

Positions 109–129 form a coiled coil; sequence RRIILQNMKDEELAIAQVEEK.

Belongs to the lambda phage major capsid protein family. In terms of assembly, homomultimer.

The protein localises to the virion. The protein resides in the host cytoplasm. Functionally, assembles to form an icosahedral capsid with a T=7 symmetry. The icosahedral capsid is about 60 nm in diameter and composed of 415 major capsid proteins. The assembly is primed by the interaction between capsid assembly protease and portal dodecamer, and major capsid proteins assemble cooperatively to form the procapsid with the help of capsid scaffolding protein. Major capsid protein forms hexons and pentons of the icosahedron. Viral genomic DNA is packaged into the procapsid through the portal vertex. The packaging triggers a dramatic reconfiguration of the capsid shell. The chain is Major capsid protein from Escherichia coli (Bacteriophage N15).